Reading from the N-terminus, the 409-residue chain is Serine/threonine transporter SstT (409 aa).

9 helical membrane-spanning segments follow: residues 15-35 (LSLVTQIVIGLIAGIALALLA), 49-69 (FVSALKAVAPILVFVLVMASI), 82-102 (PILVLYLLGTFAAAVVAVIAS), 142-162 (ALMNANFIGILAWAIGMGVAI), 193-213 (LGIFGLVASTLATSGFNALLG), 218-238 (LAVLIGCMLFVALVMNPLIVF), 301-321 (GAAITITVLTLAAVHTLGIAV), 331-351 (VVAAICACGASGVAGGSLLLI), and 357-377 (LFGIPSEIAMQVVAVGFIIGV).

Belongs to the dicarboxylate/amino acid:cation symporter (DAACS) (TC 2.A.23) family.

It is found in the cell inner membrane. It carries out the reaction L-serine(in) + Na(+)(in) = L-serine(out) + Na(+)(out). The enzyme catalyses L-threonine(in) + Na(+)(in) = L-threonine(out) + Na(+)(out). Its function is as follows. Involved in the import of serine and threonine into the cell, with the concomitant import of sodium (symport system). The chain is Serine/threonine transporter SstT from Pseudomonas fluorescens (strain ATCC BAA-477 / NRRL B-23932 / Pf-5).